Consider the following 232-residue polypeptide: MAKIAKRVQKSREGVDPAKLYGLTEAVTMIKERATAKFDETIEVAMNLGVDPRHADQMVRGVVNLPNGTGRSVRVAVFARGAKADEAKAAGADVVGAEELVEIVQGGKIDFDRCIATPDMMPLVGRLGKVLGPRGMMPNPKVGTVTMDVAGAVKASKGGAVEFRVEKAGIVHAGIGKASFDAKALEENIRAFADAVIKAKPTGAKGNYVKRVAVSSTMGPGLKIDPATISAA.

The protein belongs to the universal ribosomal protein uL1 family. In terms of assembly, part of the 50S ribosomal subunit.

In terms of biological role, binds directly to 23S rRNA. The L1 stalk is quite mobile in the ribosome, and is involved in E site tRNA release. Its function is as follows. Protein L1 is also a translational repressor protein, it controls the translation of the L11 operon by binding to its mRNA. This chain is Large ribosomal subunit protein uL1, found in Sinorhizobium medicae (strain WSM419) (Ensifer medicae).